The sequence spans 365 residues: 3-dehydroquinate synthase (365 aa).

Residues 69–74 (DGEAHK), 103–107 (GVIGD), 127–128 (TT), lysine 140, and lysine 149 contribute to the NAD(+) site. 3 residues coordinate Zn(2+): glutamate 182, histidine 245, and histidine 262.

It belongs to the sugar phosphate cyclases superfamily. Dehydroquinate synthase family. Requires Co(2+) as cofactor. Zn(2+) serves as cofactor. NAD(+) is required as a cofactor.

Its subcellular location is the cytoplasm. The enzyme catalyses 7-phospho-2-dehydro-3-deoxy-D-arabino-heptonate = 3-dehydroquinate + phosphate. The protein operates within metabolic intermediate biosynthesis; chorismate biosynthesis; chorismate from D-erythrose 4-phosphate and phosphoenolpyruvate: step 2/7. In terms of biological role, catalyzes the conversion of 3-deoxy-D-arabino-heptulosonate 7-phosphate (DAHP) to dehydroquinate (DHQ). This Pseudomonas putida (strain ATCC 700007 / DSM 6899 / JCM 31910 / BCRC 17059 / LMG 24140 / F1) protein is 3-dehydroquinate synthase.